The primary structure comprises 393 residues: Acetate kinase (393 aa).

Asn7 contacts Mg(2+). Lys14 is an ATP binding site. Position 87 (Arg87) interacts with substrate. Asp144 acts as the Proton donor/acceptor in catalysis. Residues 202 to 206 (HIGNG), 277 to 279 (DLR), and 326 to 330 (GVGEN) each bind ATP. Glu380 serves as a coordination point for Mg(2+).

The protein belongs to the acetokinase family. As to quaternary structure, homodimer. The cofactor is Mg(2+). Requires Mn(2+) as cofactor.

The protein resides in the cytoplasm. It catalyses the reaction acetate + ATP = acetyl phosphate + ADP. It functions in the pathway metabolic intermediate biosynthesis; acetyl-CoA biosynthesis; acetyl-CoA from acetate: step 1/2. In terms of biological role, catalyzes the formation of acetyl phosphate from acetate and ATP. Can also catalyze the reverse reaction. The sequence is that of Acetate kinase from Mycoplasmopsis pulmonis (strain UAB CTIP) (Mycoplasma pulmonis).